The chain runs to 330 residues: MKKTVLSGVQTTGALHLGNYLGSIKNWVKMQEEYNCFFFLADLHAITIDIKTSELNNSIMEVLAIYLAAGLNPDKVTIFAQSMVKEHAELSWLLNCVTPLGWLKRMTQFKDKAGSDQCKACLGLFAYPILMAADILIYKADIVPVGEDQKQHLELTRDIAEVINRRFDKEILKVPDILISETGTRIMSLRNGLKKMSKSDIADFSRINLKDSNDLIYQKIKKAKTDHLSFISYDKKTRPEISNLLDIYKSLSKESMEKIINNYQNQGFAKFKEDLAEIIITNLQPIRDKCLELMNDKEYLLKILHKGAEKAKIRASETVNEVKKQFGFII.

ATP is bound by residues 10–12 (QTT) and 18–19 (GN). The 'HIGH' region signature appears at 11 to 19 (TTGALHLGN). Asp-134 lines the L-tryptophan pocket. Residues 146 to 148 (GED), Ile-186, and 195 to 199 (KMSKS) each bind ATP. Residues 195–199 (KMSKS) carry the 'KMSKS' region motif.

It belongs to the class-I aminoacyl-tRNA synthetase family. In terms of assembly, homodimer.

It is found in the cytoplasm. It carries out the reaction tRNA(Trp) + L-tryptophan + ATP = L-tryptophyl-tRNA(Trp) + AMP + diphosphate + H(+). In terms of biological role, catalyzes the attachment of tryptophan to tRNA(Trp). This Rickettsia typhi (strain ATCC VR-144 / Wilmington) protein is Tryptophan--tRNA ligase.